Here is a 1291-residue protein sequence, read N- to C-terminus: Cytoplasmic FMR1-interacting protein (1291 aa).

Positions Pro1270–Asn1291 are disordered. Residues Ser1271 to Asn1291 show a composition bias toward polar residues.

This sequence belongs to the CYFIP family. As to quaternary structure, interacts with Fmr1 and Rac1. Component of the WAVE complex composed of Hem/Kette, Scar/Wave and Cyfip where it binds through its C-terminus directly to Hem. As to expression, in the embryo, expressed mainly in the gut and in the developing central nervous system where high levels of expression are found in the CNS neuropile. Expression in the gut diminishes as development proceeds (at protein level). In the adult, expressed specifically in the nervous system.

It localises to the cytoplasm. Plays a role in guidance and morphology of central and peripheral axons and in synaptic morphology. Also required for formation of cell membrane protrusions and for bristle development. Plays a role in regulating mitochondrial activity, energy metabolism and membrane potential which maintains normal gamma-aminobutyric acid (GABA) signaling and ensures normal social behavior. This is Cytoplasmic FMR1-interacting protein from Drosophila melanogaster (Fruit fly).